The sequence spans 199 residues: Acireductone dioxygenase 1 (199 aa).

Fe(2+)-binding residues include His-99, His-101, Glu-105, and His-144. His-99, His-101, Glu-105, and His-144 together coordinate Ni(2+).

It belongs to the acireductone dioxygenase (ARD) family. Fe(2+) is required as a cofactor. Ni(2+) serves as cofactor.

It is found in the cytoplasm. The protein resides in the nucleus. The enzyme catalyses 1,2-dihydroxy-5-(methylsulfanyl)pent-1-en-3-one + O2 = 4-methylsulfanyl-2-oxobutanoate + formate + 2 H(+). It carries out the reaction 1,2-dihydroxy-5-(methylsulfanyl)pent-1-en-3-one + O2 = 3-(methylsulfanyl)propanoate + CO + formate + 2 H(+). It participates in amino-acid biosynthesis; L-methionine biosynthesis via salvage pathway; L-methionine from S-methyl-5-thio-alpha-D-ribose 1-phosphate: step 5/6. In terms of biological role, catalyzes 2 different reactions between oxygen and the acireductone 1,2-dihydroxy-3-keto-5-methylthiopentene (DHK-MTPene) depending upon the metal bound in the active site. Fe-containing acireductone dioxygenase (Fe-ARD) produces formate and 2-keto-4-methylthiobutyrate (KMTB), the alpha-ketoacid precursor of methionine in the methionine recycle pathway. Ni-containing acireductone dioxygenase (Ni-ARD) produces methylthiopropionate, carbon monoxide and formate, and does not lie on the methionine recycle pathway. The sequence is that of Acireductone dioxygenase 1 (ARD1) from Oryza sativa subsp. indica (Rice).